Consider the following 192-residue polypeptide: MEENWLEIGTIVAPQGLEGELRVLSVSDFPERFQKRGMRGIQGPQGGEIREITLLRGRELPGKNVYVIKLEGVENREQAEALRGYKLWANKLEKPRLKADEYHVSELVNLEVYHHLTGEKIGVVVDIFWAGNDILAVQLEANLASVKKKSPSSDSEARALVPFVKEIVPLVDLKAARIEIAPPPGLLEINLS.

The 88-residue stretch at 99–186 folds into the PRC barrel domain; it reads ADEYHVSELV…RIEIAPPPGL (88 aa).

The protein belongs to the RimM family. Binds ribosomal protein uS19.

It is found in the cytoplasm. In terms of biological role, an accessory protein needed during the final step in the assembly of 30S ribosomal subunit, possibly for assembly of the head region. Essential for efficient processing of 16S rRNA. May be needed both before and after RbfA during the maturation of 16S rRNA. It has affinity for free ribosomal 30S subunits but not for 70S ribosomes. The sequence is that of Ribosome maturation factor RimM from Microcystis aeruginosa (strain NIES-843 / IAM M-2473).